Here is a 314-residue protein sequence, read N- to C-terminus: Taste receptor type 2 member 42 (314 aa).

Residues 1-7 (MATELDK) are Extracellular-facing. Residues 8-28 (IFLILEIAEFIIGMLGNVFIG) form a helical membrane-spanning segment. Residues 29 to 50 (LVNCSEGIKNQKVFSADFILTC) lie on the Cytoplasmic side of the membrane. Residues 51–71 (LAISTIGQLFVILFDSFLVGL) traverse the membrane as a helical segment. Residues 72-101 (ASHLYTTYRLGKPVIMLWHMTNHLTTWLAT) lie on the Extracellular side of the membrane. Residues 102–122 (CLSIFYFFKIAHFPHSLFLWL) form a helical membrane-spanning segment. Over 123–127 (RWRMN) the chain is Cytoplasmic. The helical transmembrane segment at 128 to 148 (GMIVMLLILSLFLLIFNSLVL) threads the bilayer. Over 149–187 (EIFIDISLNIIDKSNLTLYLDESKTVYDKLSILKTLLSL) the chain is Extracellular. An N-linked (GlcNAc...) asparagine glycan is attached at N163. The helical transmembrane segment at 188 to 208 (TSFIPFSLSLTSLLFLFLSLV) threads the bilayer. The Cytoplasmic segment spans residues 209–238 (RHTRNLKLSSLGSRDSSTEAHRRAMKMVMS). The chain crosses the membrane as a helical span at residues 239 to 259 (FLFLFIVHFFSLQVANWIFFM). The Extracellular segment spans residues 260-265 (LWNNKY). Residues 266-286 (IKFAMLALNAFPSCHSFILIL) traverse the membrane as a helical segment. Over 287 to 314 (GNSKLRQTAVRLLWHLRNYTKTPNPLPL) the chain is Cytoplasmic.

Belongs to the G-protein coupled receptor T2R family.

It localises to the membrane. Functionally, receptor that may play a role in the perception of bitterness and is gustducin-linked. May play a role in sensing the chemical composition of the gastrointestinal content. The activity of this receptor may stimulate alpha gustducin, mediate PLC-beta-2 activation and lead to the gating of TRPM5. This is Taste receptor type 2 member 42 (TAS2R42) from Pan troglodytes (Chimpanzee).